We begin with the raw amino-acid sequence, 516 residues long: Potassium voltage-gated channel subfamily A member 10 (516 aa).

The helical transmembrane segment at Val-223–Pro-244 threads the bilayer. N-linked (GlcNAc...) asparagine glycosylation is present at Asn-261. Residues Phe-276 to Ile-296 traverse the membrane as a helical segment. The chain crosses the membrane as a helical span at residues Ile-308–Leu-328. Asn-339 is a glycosylation site (N-linked (GlcNAc...) asparagine). The chain crosses the membrane as a helical; Voltage-sensor span at residues Ile-344–Ser-363. A helical membrane pass occupies residues Leu-380–Phe-400. The short motif at Thr-426–Asp-431 is the Selectivity filter element. A helical transmembrane segment spans residues Ile-441–Ile-461. The N-linked (GlcNAc...) asparagine glycan is linked to Asn-503.

Belongs to the potassium channel family. A (Shaker) (TC 1.A.1.2) subfamily. Kv1.8/KCNA10 sub-subfamily. In terms of assembly, homotetramer. Detected in brain, cochlear sensory epithelium, cochlear ganglion, tegumentum vasculosum. Detected at low levels in cochlear lagena.

The protein resides in the membrane. It carries out the reaction K(+)(in) = K(+)(out). With respect to regulation, the channel activity is up-regulated by cAMP. Its function is as follows. Voltage-gated potassium ion channel that mediates K(+) permeability of excitable membranes. When opened in response to the voltage difference across the membrane, KCNA10 channel selectively allows the flow of potassium ions across the membrane down their electrochemical gradient. The chain is Potassium voltage-gated channel subfamily A member 10 (KCNA10) from Gallus gallus (Chicken).